Reading from the N-terminus, the 252-residue chain is 2-C-methyl-D-erythritol 4-phosphate cytidylyltransferase (252 aa).

It belongs to the IspD/TarI cytidylyltransferase family. IspD subfamily.

It carries out the reaction 2-C-methyl-D-erythritol 4-phosphate + CTP + H(+) = 4-CDP-2-C-methyl-D-erythritol + diphosphate. It functions in the pathway isoprenoid biosynthesis; isopentenyl diphosphate biosynthesis via DXP pathway; isopentenyl diphosphate from 1-deoxy-D-xylulose 5-phosphate: step 2/6. Its function is as follows. Catalyzes the formation of 4-diphosphocytidyl-2-C-methyl-D-erythritol from CTP and 2-C-methyl-D-erythritol 4-phosphate (MEP). This Chlorobium phaeobacteroides (strain BS1) protein is 2-C-methyl-D-erythritol 4-phosphate cytidylyltransferase.